A 579-amino-acid polypeptide reads, in one-letter code: Laccase (579 aa).

Residues 1 to 31 (MTDWSRRRFLQTGAALGIAGTLPQTTTEVSA) constitute a signal peptide (tat-type signal). The Plastocyanin-like 1 domain maps to 82-214 (WGFDGSYPGP…AGLLGLYSIT (133 aa)). 4 residues coordinate Cu cation: H145, H147, H192, and H194. The tract at residues 372–401 (VSDPSTPPEDASADPTSLSLPTPASYDESD) is disordered. One can recognise a Plastocyanin-like 2 domain in the interval 423–530 (LNGHVFGDED…NKMMIPFVVE (108 aa)). Residue N449 is glycosylated (N-linked (GlcNAc...) asparagine). 8 residues coordinate Cu cation: H455, H458, H460, H512, C513, H514, H518, and M523. An N-linked (GlcNAc...) asparagine glycan is attached at N557.

This sequence belongs to the multicopper oxidase family. It depends on Cu(2+) as a cofactor. Post-translationally, exported by the Tat system. In terms of processing, glycosylated.

The protein localises to the secreted. It carries out the reaction 4 hydroquinone + O2 = 4 benzosemiquinone + 2 H2O. Its activity is regulated as follows. Inhibited by 1 mM NaN(3), 10 mM thiourea, 10 mM 1,10-phenanthroline, 0.1 mM DL-dithiothreitol (DTT) and 1 mM L-cysteine. The inhibition by DTT and L-cysteine is likely caused by reduction of the oxidized substrate and not by inhibition of the enzyme. Catalyzes the oxidation of a wide variety of organic substrates, including bilirubin, syringaldazine (SGZ), 2,2'-azino-di-(3-ethylbenzothiazoline)-6-sulfonic acid (ABTS) and dimethoxyphenol (DMP). No oxidation of Fe(2+) or guaiacol. In Haloferax volcanii (strain ATCC 29605 / DSM 3757 / JCM 8879 / NBRC 14742 / NCIMB 2012 / VKM B-1768 / DS2) (Halobacterium volcanii), this protein is Laccase (lccA).